A 268-amino-acid polypeptide reads, in one-letter code: Purine nucleoside phosphorylase (268 aa).

Residues Ser-36, His-68, Arg-88–His-90, and Ala-120 each bind phosphate. An a purine D-ribonucleoside-binding site is contributed by Glu-189. A phosphate-binding site is contributed by Ser-208. Residue Asn-231 participates in a purine D-ribonucleoside binding.

It belongs to the PNP/MTAP phosphorylase family. In terms of assembly, homotrimer.

It carries out the reaction a purine 2'-deoxy-D-ribonucleoside + phosphate = a purine nucleobase + 2-deoxy-alpha-D-ribose 1-phosphate. It functions in the pathway purine metabolism; purine nucleoside salvage. In terms of biological role, the purine nucleoside phosphorylases catalyze the phosphorolytic breakdown of the N-glycosidic bond in the beta-(deoxy)ribonucleoside molecules, with the formation of the corresponding free purine bases and pentose-1-phosphate. Cleaves guanosine, inosine, 2'-deoxyguanosine and 2'-deoxyinosine. The chain is Purine nucleoside phosphorylase (punA) from Mycobacterium bovis (strain ATCC BAA-935 / AF2122/97).